The primary structure comprises 290 residues: Small ribosomal subunit biogenesis GTPase RsgA (290 aa).

One can recognise a CP-type G domain in the interval 62 to 219 (RTCLKRPAVA…VADTPGFSRL (158 aa)). Residues 111 to 114 (NKAD) and 161 to 169 (GPSGVGKSS) each bind GTP. Zn(2+) contacts are provided by Cys243, Cys248, His250, and Cys256.

Belongs to the TRAFAC class YlqF/YawG GTPase family. RsgA subfamily. In terms of assembly, monomer. Associates with 30S ribosomal subunit, binds 16S rRNA. It depends on Zn(2+) as a cofactor.

It localises to the cytoplasm. In terms of biological role, one of several proteins that assist in the late maturation steps of the functional core of the 30S ribosomal subunit. Helps release RbfA from mature subunits. May play a role in the assembly of ribosomal proteins into the subunit. Circularly permuted GTPase that catalyzes slow GTP hydrolysis, GTPase activity is stimulated by the 30S ribosomal subunit. The chain is Small ribosomal subunit biogenesis GTPase RsgA from Moorella thermoacetica (strain ATCC 39073 / JCM 9320).